Reading from the N-terminus, the 315-residue chain is L-lactate dehydrogenase (315 aa).

NAD(+) contacts are provided by residues Val-17, Asp-38, Lys-43, Tyr-69, and 83-84; that span reads GA. Substrate is bound by residues Gln-86, Arg-92, and 124–127; that span reads NPVD. NAD(+) contacts are provided by residues 122–124 and Ser-147; that span reads ATN. 152 to 155 contacts substrate; that stretch reads DTAR. Beta-D-fructose 1,6-bisphosphate contacts are provided by Arg-157 and His-172. The Proton acceptor role is filled by His-179. Position 224 is a phosphotyrosine (Tyr-224). Residue Thr-233 participates in substrate binding.

Belongs to the LDH/MDH superfamily. LDH family. In terms of assembly, homotetramer.

It localises to the cytoplasm. It catalyses the reaction (S)-lactate + NAD(+) = pyruvate + NADH + H(+). Its pathway is fermentation; pyruvate fermentation to lactate; (S)-lactate from pyruvate: step 1/1. Its activity is regulated as follows. Allosterically activated by fructose 1,6-bisphosphate (FBP). Functionally, catalyzes the conversion of lactate to pyruvate. This chain is L-lactate dehydrogenase, found in Bacillus pumilus (strain SAFR-032).